Reading from the N-terminus, the 507-residue chain is Glycine, alanine and asparagine-rich protein (507 aa).

The N-terminal stretch at 1 to 17 (MLRVPLLVLCLALSVGA) is a signal peptide. Positions 158-185 (SAQALASATAELQAAQDAYDQASAYAEA) form a coiled coil. The span at 462–498 (GNGNGGNGRNGNGGNGRNGNGGNGGNGNGRNGRGGRY) shows a compositional bias: gly residues. Residues 462 to 507 (GNGNGGNGRNGNGGNGRNGNGGNGGNGNGRNGRGGRYYYGSSDYYY) are disordered.

As to expression, component of the acid-soluble and acid-insoluble organic matrix of calcified shell layers (at protein level).

It is found in the secreted. This Haliotis asinina (Donkey's ear abalone) protein is Glycine, alanine and asparagine-rich protein.